Here is a 116-residue protein sequence, read N- to C-terminus: Transcriptional regulator WhiB4 (116 aa).

Positions 36-92 (LCRATDPDELFVRGAAQRKAAVICRHCPVMQECGADALDNKVEFGVWGGMTERQRRA) constitute a 4Fe-4S Wbl-type domain. Positions 37, 59, 62, and 68 each coordinate [4Fe-4S] cluster.

It belongs to the WhiB family. Requires [4Fe-4S] cluster as cofactor. The Fe-S cluster can be nitrosylated by nitric oxide (NO). In terms of processing, upon Fe-S cluster removal intramolecular disulfide bonds are formed.

The protein resides in the cytoplasm. Acts as a transcriptional regulator. Probably redox-responsive. The apo- but not holo-form probably binds DNA. Plays a role in lipooligosaccharide (LOS) biosynthesis by regulating LOS gene expression. This Mycobacterium marinum (strain ATCC BAA-535 / M) protein is Transcriptional regulator WhiB4 (whiB4).